A 162-amino-acid chain; its full sequence is uncharacterized protein (162 aa).

A run of 5 helical transmembrane segments spans residues T15 to L40, I47 to L66, Y76 to Y98, K105 to L124, and G128 to I150.

It localises to the cell membrane. This is an uncharacterized protein from Archaeoglobus fulgidus (strain ATCC 49558 / DSM 4304 / JCM 9628 / NBRC 100126 / VC-16).